The following is a 711-amino-acid chain: Denticleless protein homolog B (711 aa).

WD repeat units follow at residues 47 to 89 (GRAV…MQRL), 96 to 135 (AHTN…LIGE), and 138 to 178 (GHQC…KDGF). A DDB1-binding motif motif is present at residues 168–171 (WDTR). The Nuclear localization signal motif lies at 197–204 (PSKVKKRK). WD repeat units lie at residues 215–254 (DSQQ…STYR), 270–309 (TRKL…TDPV), 314–355 (GHQN…AAPI), and 359–398 (GHCQ…SEDS). The DDB1-binding motif signature appears at 244-247 (WDLR). Disordered regions lie at residues 473-524 (QTPK…AFTP) and 601-698 (EFDQ…TPGS). 2 stretches are compositionally biased toward polar residues: residues 504 to 516 (TPKS…SKTP) and 606 to 627 (LSPS…TLSP). Residues 631–642 (MKSDFVDKENSS) are compositionally biased toward basic and acidic residues. A compositionally biased stretch (low complexity) spans 658–675 (DNSSPQFKSSSSPSSRNS). Positions 684-697 (NAPNSPVSVPTTPG) are enriched in polar residues.

It belongs to the WD repeat cdt2 family. As to quaternary structure, component of the DCX(DTL) E3 ubiquitin ligase complex, at least composed of cul4 (cul4a or cul4b), ddb1, dtl/cdt2 and rbx1.

The protein resides in the nucleus. The protein localises to the cytoplasm. It localises to the cytoskeleton. Its subcellular location is the microtubule organizing center. It is found in the centrosome. The protein resides in the chromosome. Its pathway is protein modification; protein ubiquitination. Its function is as follows. Substrate-specific adapter of a DCX (DDB1-CUL4-X-box) E3 ubiquitin-protein ligase complex required for cell cycle control, DNA damage response and translesion DNA synthesis. The DCX(DTL) complex, also named CRL4(CDT2) complex, mediates the polyubiquitination and subsequent degradation of CDT1, CDKN1A/p21(CIP1), KMT5A and SDE2. CDT1 degradation in response to DNA damage is necessary to ensure proper cell cycle regulation of DNA replication. CDKN1A/p21(CIP1) degradation during S phase or following UV irradiation is essential to control replication licensing. KMT5A degradation is also important for a proper regulation of mechanisms such as TGF-beta signaling, cell cycle progression, DNA repair and cell migration. Most substrates require their interaction with PCNA for their polyubiquitination: substrates interact with PCNA via their PIP-box, and those containing the 'K+4' motif in the PIP box, recruit the DCX(DTL) complex, leading to their degradation. In undamaged proliferating cells, the DCX(DTL) complex also promotes the 'Lys-164' monoubiquitination of PCNA, thereby being involved in PCNA-dependent translesion DNA synthesis. May play a role in the regulation of the circadian clock. This chain is Denticleless protein homolog B (dtl-b), found in Xenopus laevis (African clawed frog).